A 360-amino-acid polypeptide reads, in one-letter code: Peptide chain release factor 1 (360 aa).

Residue glutamine 235 is modified to N5-methylglutamine. The disordered stretch occupies residues 285 to 305 (KRQEAEASERRNLLGSGDRSD).

Belongs to the prokaryotic/mitochondrial release factor family. In terms of processing, methylated by PrmC. Methylation increases the termination efficiency of RF1.

The protein resides in the cytoplasm. Its function is as follows. Peptide chain release factor 1 directs the termination of translation in response to the peptide chain termination codons UAG and UAA. The protein is Peptide chain release factor 1 of Proteus mirabilis (strain HI4320).